The following is a 214-amino-acid chain: Adenylate kinase (214 aa).

10 to 15 (GVGKGT) serves as a coordination point for ATP. The interval 30 to 59 (STGDILRAAVKELTPMGAKAKGYMDSGALV) is NMP. Residues Thr31, Arg36, 57-59 (ALV), 85-88 (GFPR), and Gln92 each bind AMP. Residues 126-163 (GRRACANCGAGYHVDFAPSKVAGVCDACSGQLVQREDD) are LID. Arg127 contacts ATP. The Zn(2+) site is built by Cys130, Cys133, Cys150, and Cys153. Arg160 and Arg171 together coordinate AMP. Gly199 is a binding site for ATP.

It belongs to the adenylate kinase family. Monomer.

The protein localises to the cytoplasm. It carries out the reaction AMP + ATP = 2 ADP. It functions in the pathway purine metabolism; AMP biosynthesis via salvage pathway; AMP from ADP: step 1/1. Functionally, catalyzes the reversible transfer of the terminal phosphate group between ATP and AMP. Plays an important role in cellular energy homeostasis and in adenine nucleotide metabolism. The polypeptide is Adenylate kinase (Citrifermentans bemidjiense (strain ATCC BAA-1014 / DSM 16622 / JCM 12645 / Bem) (Geobacter bemidjiensis)).